The sequence spans 214 residues: Phosphatidylserine decarboxylase proenzyme (214 aa).

The active-site Schiff-base intermediate with substrate; via pyruvic acid is the serine 183. At serine 183 the chain carries Pyruvic acid (Ser); by autocatalysis.

Belongs to the phosphatidylserine decarboxylase family. PSD-A subfamily. Heterodimer of a large membrane-associated beta subunit and a small pyruvoyl-containing alpha subunit. It depends on pyruvate as a cofactor. Post-translationally, is synthesized initially as an inactive proenzyme. Formation of the active enzyme involves a self-maturation process in which the active site pyruvoyl group is generated from an internal serine residue via an autocatalytic post-translational modification. Two non-identical subunits are generated from the proenzyme in this reaction, and the pyruvate is formed at the N-terminus of the alpha chain, which is derived from the carboxyl end of the proenzyme. The post-translation cleavage follows an unusual pathway, termed non-hydrolytic serinolysis, in which the side chain hydroxyl group of the serine supplies its oxygen atom to form the C-terminus of the beta chain, while the remainder of the serine residue undergoes an oxidative deamination to produce ammonia and the pyruvoyl prosthetic group on the alpha chain.

It localises to the cell membrane. The enzyme catalyses a 1,2-diacyl-sn-glycero-3-phospho-L-serine + H(+) = a 1,2-diacyl-sn-glycero-3-phosphoethanolamine + CO2. The protein operates within phospholipid metabolism; phosphatidylethanolamine biosynthesis; phosphatidylethanolamine from CDP-diacylglycerol: step 2/2. Functionally, catalyzes the formation of phosphatidylethanolamine (PtdEtn) from phosphatidylserine (PtdSer). This chain is Phosphatidylserine decarboxylase proenzyme, found in Chlorobaculum parvum (strain DSM 263 / NCIMB 8327) (Chlorobium vibrioforme subsp. thiosulfatophilum).